The sequence spans 475 residues: Putative aldehyde dehydrogenase SSP0762 (475 aa).

201–207 (GDGQGVG) contacts NAD(+). Residues Glu-245 and Cys-279 contribute to the active site.

The protein belongs to the aldehyde dehydrogenase family.

The enzyme catalyses an aldehyde + NAD(+) + H2O = a carboxylate + NADH + 2 H(+). In Staphylococcus saprophyticus subsp. saprophyticus (strain ATCC 15305 / DSM 20229 / NCIMB 8711 / NCTC 7292 / S-41), this protein is Putative aldehyde dehydrogenase SSP0762.